The primary structure comprises 20 residues: GMP synthase [glutamine-hydrolyzing] (20 aa).

The region spanning 1–20 (ALGDQLLSVFVDHTLVDEVA) is the GMPS ATP-PPase domain.

In terms of assembly, homodimer.

It carries out the reaction XMP + L-glutamine + ATP + H2O = GMP + L-glutamate + AMP + diphosphate + 2 H(+). It functions in the pathway purine metabolism; GMP biosynthesis; GMP from XMP (L-Gln route): step 1/1. Functionally, catalyzes the synthesis of GMP from XMP. The protein is GMP synthase [glutamine-hydrolyzing] (guaA) of Fructilactobacillus sanfranciscensis (Lactobacillus sanfranciscensis).